A 175-amino-acid chain; its full sequence is Endoribonuclease YbeY (175 aa).

Zn(2+) contacts are provided by H129, H133, and H139.

It belongs to the endoribonuclease YbeY family. Zn(2+) is required as a cofactor.

It is found in the cytoplasm. In terms of biological role, single strand-specific metallo-endoribonuclease involved in late-stage 70S ribosome quality control and in maturation of the 3' terminus of the 16S rRNA. In Lactobacillus johnsonii (strain CNCM I-12250 / La1 / NCC 533), this protein is Endoribonuclease YbeY.